The sequence spans 198 residues: MHYPEPLSKLIDSFMKLPGIGPKTAARLAFHVLAMKEDTVLEFAKALVDVKRHIHYCTICGHITDTDPCYICKDERRDRTTICVVQDPKDVIAMERMKEYNGLYHVLHGAISPMEGIGPEDIKIAELLTRLQDETVQEVILATDPNIEGEATAMYISRLLKPTGIKVTRIAHGLPVGGDLEYADEVTLSKALEGRREL.

Residues 57–72 (CTICGHITDTDPCYIC) form a C4-type zinc finger. A Toprim domain is found at 80 to 175 (TTICVVQDPK…KVTRIAHGLP (96 aa)).

Belongs to the RecR family.

Functionally, may play a role in DNA repair. It seems to be involved in an RecBC-independent recombinational process of DNA repair. It may act with RecF and RecO. The sequence is that of Recombination protein RecR from Geobacillus kaustophilus (strain HTA426).